The sequence spans 501 residues: Glycerol kinase (501 aa).

ADP is bound at residue Thr14. Positions 14, 15, and 16 each coordinate ATP. Thr14 contributes to the sn-glycerol 3-phosphate binding site. Arg18 lines the ADP pocket. Residues Arg84, Glu85, Tyr135, and Asp244 each contribute to the sn-glycerol 3-phosphate site. Positions 84, 85, 135, 244, and 245 each coordinate glycerol. ADP contacts are provided by Thr266 and Gly309. Residues Thr266, Gly309, Gln313, and Gly410 each contribute to the ATP site. Residues Gly410 and Asn414 each coordinate ADP.

This sequence belongs to the FGGY kinase family.

It catalyses the reaction glycerol + ATP = sn-glycerol 3-phosphate + ADP + H(+). The protein operates within polyol metabolism; glycerol degradation via glycerol kinase pathway; sn-glycerol 3-phosphate from glycerol: step 1/1. With respect to regulation, inhibited by fructose 1,6-bisphosphate (FBP). Its function is as follows. Key enzyme in the regulation of glycerol uptake and metabolism. Catalyzes the phosphorylation of glycerol to yield sn-glycerol 3-phosphate. This Deinococcus radiodurans (strain ATCC 13939 / DSM 20539 / JCM 16871 / CCUG 27074 / LMG 4051 / NBRC 15346 / NCIMB 9279 / VKM B-1422 / R1) protein is Glycerol kinase.